The following is a 63-amino-acid chain: UPF0337 protein PSPTO_1596 (63 aa).

The interval 20-63 (KQAVGKATDNTKLQAEGKAQELKGEGQQAKGEVKDAVKKGVDKV) is disordered. Residues 50-63 (GEVKDAVKKGVDKV) are compositionally biased toward basic and acidic residues.

This sequence belongs to the UPF0337 (CsbD) family.

The protein is UPF0337 protein PSPTO_1596 of Pseudomonas syringae pv. tomato (strain ATCC BAA-871 / DC3000).